The chain runs to 646 residues: Acetyl-coenzyme A synthetase (646 aa).

Residues 189–192, Thr-307, and Asn-331 contribute to the CoA site; that span reads RGPK. ATP is bound by residues 383–385, 407–412, Asp-496, and Arg-511; these read GEP and DTWWQT. Position 519 (Ser-519) interacts with CoA. Arg-522 is a binding site for ATP. 3 residues coordinate Mg(2+): Val-533, His-535, and Val-538. A CoA-binding site is contributed by Arg-580. Residue Lys-605 is modified to N6-acetyllysine.

The protein belongs to the ATP-dependent AMP-binding enzyme family. The cofactor is Mg(2+). Post-translationally, acetylated. Deacetylation by the SIR2-homolog deacetylase activates the enzyme.

It carries out the reaction acetate + ATP + CoA = acetyl-CoA + AMP + diphosphate. Catalyzes the conversion of acetate into acetyl-CoA (AcCoA), an essential intermediate at the junction of anabolic and catabolic pathways. AcsA undergoes a two-step reaction. In the first half reaction, AcsA combines acetate with ATP to form acetyl-adenylate (AcAMP) intermediate. In the second half reaction, it can then transfer the acetyl group from AcAMP to the sulfhydryl group of CoA, forming the product AcCoA. This Desulfatibacillum aliphaticivorans protein is Acetyl-coenzyme A synthetase.